Here is a 127-residue protein sequence, read N- to C-terminus: uncharacterized protein (127 aa).

The N-terminal stretch at 1 to 23 is a signal peptide; that stretch reads MSKPLKFLLWSSLALLLLQIGSG.

This is an uncharacterized protein from Arabidopsis thaliana (Mouse-ear cress).